Reading from the N-terminus, the 388-residue chain is Ribosomal RNA large subunit methyltransferase F (388 aa).

The span at Met1–Lys22 shows a compositional bias: polar residues. The disordered stretch occupies residues Met1–Ala51. Residues Ile27–Pro36 are compositionally biased toward basic residues.

Belongs to the methyltransferase superfamily. METTL16/RlmF family.

It localises to the cytoplasm. The catalysed reaction is adenosine(1618) in 23S rRNA + S-adenosyl-L-methionine = N(6)-methyladenosine(1618) in 23S rRNA + S-adenosyl-L-homocysteine + H(+). Functionally, specifically methylates the adenine in position 1618 of 23S rRNA. This Vibrio campbellii (strain ATCC BAA-1116) protein is Ribosomal RNA large subunit methyltransferase F.